Consider the following 294-residue polypeptide: MAAGRLLLYTGLSLALCALGMLAVAICSDHWYETDARKHRDRCKAFNTRRVDPGFIYNNNNNLPLRASRSRLDRWEGKLLRARNRRQLFAMSPADECSRQYNSTNMGLWRKCHRQGFDPEIAALIRKGEIERCTYIKYHYSSATIPRNLTFNITKTIRQDEWHALHLRRMTAGFMGMAVAIILFGWIIGVLGCCWDRGLMQYVAGLLFLMGGTFCIISLCTCVAGINFELSRYPRYLYGLPDDISHGYGWSMFCAWGGLGLTLISGFFCTLAPSVQPVPRTNYPKSRPENGTVC.

Residues 1–23 form the signal peptide; that stretch reads MAAGRLLLYTGLSLALCALGMLA. 2 N-linked (GlcNAc...) asparagine glycosylation sites follow: asparagine 148 and asparagine 152. 3 helical membrane passes run 172–192, 206–226, and 252–272; these read AGFMGMAVAIILFGWIIGVLG, LLFLMGGTFCIISLCTCVAGI, and MFCAWGGLGLTLISGFFCTLA.

The protein belongs to the TMEM178 family.

It localises to the membrane. The sequence is that of Transmembrane protein 178B (TMEM178B) from Homo sapiens (Human).